We begin with the raw amino-acid sequence, 285 residues long: ATP synthase gamma chain (285 aa).

It belongs to the ATPase gamma chain family. In terms of assembly, F-type ATPases have 2 components, CF(1) - the catalytic core - and CF(0) - the membrane proton channel. CF(1) has five subunits: alpha(3), beta(3), gamma(1), delta(1), epsilon(1). CF(0) has three main subunits: a, b and c.

Its subcellular location is the cell membrane. Produces ATP from ADP in the presence of a proton gradient across the membrane. The gamma chain is believed to be important in regulating ATPase activity and the flow of protons through the CF(0) complex. The chain is ATP synthase gamma chain from Dehalococcoides mccartyi (strain CBDB1).